The sequence spans 93 residues: MTELLAVEEINQRISQISDWKLEGNKLKYIKTVKNFVEAINFVNKLVAPAEASQHHPDLEVSYNKVTIILTTHNSGGLTEKDFKMAKTISGLS.

Belongs to the pterin-4-alpha-carbinolamine dehydratase family.

It catalyses the reaction (4aS,6R)-4a-hydroxy-L-erythro-5,6,7,8-tetrahydrobiopterin = (6R)-L-erythro-6,7-dihydrobiopterin + H2O. The sequence is that of Putative pterin-4-alpha-carbinolamine dehydratase from Trichodesmium erythraeum (strain IMS101).